A 365-amino-acid polypeptide reads, in one-letter code: Probable L-tyrosine/L-aspartate decarboxylase (365 aa).

K225 is modified (N6-(pyridoxal phosphate)lysine).

Belongs to the group II decarboxylase family. MfnA subfamily. Requires pyridoxal 5'-phosphate as cofactor.

It catalyses the reaction L-tyrosine + H(+) = tyramine + CO2. The enzyme catalyses L-aspartate + H(+) = beta-alanine + CO2. It participates in cofactor biosynthesis; methanofuran biosynthesis. Its pathway is cofactor biosynthesis; coenzyme A biosynthesis. Its function is as follows. Catalyzes the decarboxylation of L-tyrosine to produce tyramine for methanofuran biosynthesis. Can also catalyze the decarboxylation of L-aspartate to produce beta-alanine for coenzyme A (CoA) biosynthesis. This is Probable L-tyrosine/L-aspartate decarboxylase from Methanocorpusculum labreanum (strain ATCC 43576 / DSM 4855 / Z).